Reading from the N-terminus, the 651-residue chain is DNA mismatch repair protein MutL (651 aa).

Residues 336–398 (RLDMTEPETG…ANSGYQPENP (63 aa)) are disordered. Polar residues predominate over residues 385-394 (ARESANSGYQ).

This sequence belongs to the DNA mismatch repair MutL/HexB family.

This protein is involved in the repair of mismatches in DNA. It is required for dam-dependent methyl-directed DNA mismatch repair. May act as a 'molecular matchmaker', a protein that promotes the formation of a stable complex between two or more DNA-binding proteins in an ATP-dependent manner without itself being part of a final effector complex. The polypeptide is DNA mismatch repair protein MutL (Pectobacterium atrosepticum (strain SCRI 1043 / ATCC BAA-672) (Erwinia carotovora subsp. atroseptica)).